The sequence spans 152 residues: SsrA-binding protein (152 aa).

Belongs to the SmpB family.

It localises to the cytoplasm. In terms of biological role, required for rescue of stalled ribosomes mediated by trans-translation. Binds to transfer-messenger RNA (tmRNA), required for stable association of tmRNA with ribosomes. tmRNA and SmpB together mimic tRNA shape, replacing the anticodon stem-loop with SmpB. tmRNA is encoded by the ssrA gene; the 2 termini fold to resemble tRNA(Ala) and it encodes a 'tag peptide', a short internal open reading frame. During trans-translation Ala-aminoacylated tmRNA acts like a tRNA, entering the A-site of stalled ribosomes, displacing the stalled mRNA. The ribosome then switches to translate the ORF on the tmRNA; the nascent peptide is terminated with the 'tag peptide' encoded by the tmRNA and targeted for degradation. The ribosome is freed to recommence translation, which seems to be the essential function of trans-translation. This is SsrA-binding protein from Rickettsia canadensis (strain McKiel).